The sequence spans 238 residues: Pyridoxine 5'-phosphate synthase (238 aa).

Position 7 (N7) interacts with 3-amino-2-oxopropyl phosphate. Residue 9–10 (DH) coordinates 1-deoxy-D-xylulose 5-phosphate. 3-amino-2-oxopropyl phosphate is bound at residue R18. H43 acts as the Proton acceptor in catalysis. The 1-deoxy-D-xylulose 5-phosphate site is built by R45 and H50. The active-site Proton acceptor is the E70. T100 lines the 1-deoxy-D-xylulose 5-phosphate pocket. Residue H190 is the Proton donor of the active site. 3-amino-2-oxopropyl phosphate is bound by residues G191 and 212-213 (GH).

It belongs to the PNP synthase family. As to quaternary structure, homooctamer; tetramer of dimers.

Its subcellular location is the cytoplasm. The enzyme catalyses 3-amino-2-oxopropyl phosphate + 1-deoxy-D-xylulose 5-phosphate = pyridoxine 5'-phosphate + phosphate + 2 H2O + H(+). It functions in the pathway cofactor biosynthesis; pyridoxine 5'-phosphate biosynthesis; pyridoxine 5'-phosphate from D-erythrose 4-phosphate: step 5/5. Functionally, catalyzes the complicated ring closure reaction between the two acyclic compounds 1-deoxy-D-xylulose-5-phosphate (DXP) and 3-amino-2-oxopropyl phosphate (1-amino-acetone-3-phosphate or AAP) to form pyridoxine 5'-phosphate (PNP) and inorganic phosphate. The chain is Pyridoxine 5'-phosphate synthase from Prochlorococcus marinus subsp. pastoris (strain CCMP1986 / NIES-2087 / MED4).